We begin with the raw amino-acid sequence, 518 residues long: Protein translocase subunit SecD (518 aa).

Transmembrane regions (helical) follow at residues 9 to 29 (IVLS…NFIQ), 356 to 376 (GKKA…LSYG), 377 to 397 (VIGL…LALL), 406 to 426 (LPGI…NVLI), 451 to 473 (AFAT…YIFG), and 486 to 506 (IGII…IDIW).

It belongs to the SecD/SecF family. SecD subfamily. Forms a complex with SecF. Part of the essential Sec protein translocation apparatus which comprises SecA, SecYEG and auxiliary proteins SecDF-YajC and YidC.

It localises to the cell inner membrane. Its function is as follows. Part of the Sec protein translocase complex. Interacts with the SecYEG preprotein conducting channel. SecDF uses the proton motive force (PMF) to complete protein translocation after the ATP-dependent function of SecA. The protein is Protein translocase subunit SecD of Rickettsia typhi (strain ATCC VR-144 / Wilmington).